Consider the following 715-residue polypeptide: Probable serine/threonine-protein kinase mkcE (715 aa).

Disordered stretches follow at residues 1-125 (MQKI…SQHQ), 228-330 (QLQQ…TTTT), and 366-385 (GVDNLSSTTTSLSQNPPIQP). Gly residues predominate over residues 42–53 (YDGGGSGSGSGG). 2 stretches are compositionally biased toward low complexity: residues 54–70 (SSSNSSGSSRKINTGGN) and 80–125 (SPSN…SQHQ). Residues 207–241 (TGKKNFQQQQLQQLQQQQQQQQLQQQQHQQHNHQI) are a coiled coil. The span at 367–378 (VDNLSSTTTSLS) shows a compositional bias: low complexity. A Protein kinase domain is found at 427–683 (RIGENAEVKG…PTQLLQHPFI (257 aa)). ATP is bound by residues 433 to 441 (EVKGAFGTV) and lysine 459. The Proton acceptor role is filled by aspartate 550.

It belongs to the protein kinase superfamily. STE Ser/Thr protein kinase family. STE20 subfamily. The cofactor is Mg(2+).

The enzyme catalyses L-seryl-[protein] + ATP = O-phospho-L-seryl-[protein] + ADP + H(+). The catalysed reaction is L-threonyl-[protein] + ATP = O-phospho-L-threonyl-[protein] + ADP + H(+). The protein is Probable serine/threonine-protein kinase mkcE of Dictyostelium discoideum (Social amoeba).